A 496-amino-acid chain; its full sequence is Transcription termination/antitermination protein NusA (496 aa).

Residues 135–200 (GQIITGIVKK…RGAQLFISRS (66 aa)) enclose the S1 motif domain. One can recognise a KH domain in the interval 302 to 370 (CHTMDIAVDI…KNLNINENII (69 aa)). 2 consecutive repeat copies span residues 364–414 (NINE…KSKL) and 440–490 (GMNA…RNIC). The segment at 364 to 490 (NINENIIKIL…LLIMTARNIC (127 aa)) is 2 X 51 AA approximate repeats.

Belongs to the NusA family. Monomer. Binds directly to the core enzyme of the DNA-dependent RNA polymerase and to nascent RNA.

It localises to the cytoplasm. Functionally, participates in both transcription termination and antitermination. The sequence is that of Transcription termination/antitermination protein NusA from Buchnera aphidicola subsp. Acyrthosiphon pisum (strain APS) (Acyrthosiphon pisum symbiotic bacterium).